A 382-amino-acid chain; its full sequence is Two-component response regulator ARR14 (382 aa).

The Response regulatory domain occupies Arg12–Val128. Asp63 is modified (4-aspartylphosphate). A compositionally biased stretch (basic residues) spans Cys171–Ser181. The interval Cys171–Leu193 is disordered. The Nuclear localization signal signature appears at Lys199–Arg202. Positions Arg202 to Arg252 form a DNA-binding region, myb-like GARP.

It belongs to the ARR family. Type-B subfamily. Binds the target DNA as a monomer. Post-translationally, two-component system major event consists of a His-to-Asp phosphorelay between a sensor histidine kinase (HK) and a response regulator (RR). In plants, the His-to-Asp phosphorelay involves an additional intermediate named Histidine-containing phosphotransfer protein (HPt). This multistep phosphorelay consists of a His-Asp-His-Asp sequential transfer of a phosphate group between first a His and an Asp of the HK protein, followed by the transfer to a conserved His of the HPt protein and finally the transfer to an Asp in the receiver domain of the RR protein. As to expression, predominantly expressed in young leaf tissue.

The protein resides in the nucleus. In terms of biological role, transcriptional activator that binds specifically to the DNA sequence 5'-[AG]GATT-3'. Functions as a response regulator involved in His-to-Asp phosphorelay signal transduction system. Phosphorylation of the Asp residue in the receiver domain activates the ability of the protein to promote the transcription of target genes. Could directly activate some type-A response regulators in response to cytokinins. The protein is Two-component response regulator ARR14 (ARR14) of Arabidopsis thaliana (Mouse-ear cress).